The following is a 207-amino-acid chain: Frataxin, mitochondrial (207 aa).

The transit peptide at 1–40 directs the protein to the mitochondrion; it reads MWAFGGRAAVGLLPRTASRASAWVGNPRWREPIVTCGRRG.

This sequence belongs to the frataxin family. As to quaternary structure, component of the mitochondrial core iron-sulfur cluster (ISC) complex composed of NFS1, LYRM4, NDUFAB1, ISCU, FXN, and FDX2; this complex is a heterohexamer containing two copies of each monomer. Homodimer. Monomer (probable predominant form). Oligomer. Monomers and polymeric aggregates of &gt;1 MDa have been isolated from mitochondria. A small fraction of heterologous overexpressed recombinant frataxin forms high-molecular weight aggregates that incorporate iron. Interacts with LYRM4. Interacts (via ferrous form) with ISCU; the interaction is possible when both are bound to the dimeric form of the cysteine desulfurase complex (NFS1:LYRM4) and the interaction enhances FXN interaction to the dimeric form of the cysteine desulfurase complex (NFS1:LYRM4). Interacts with FECH; one iron-bound FXN monomer seems to interact with a FECH homodimer. Interacts with SDHA and SDHB. Interacts with ACO2; the interaction is dependent on citrate. Interacts with HSPA9. Component of a complex composed of FXN, NFS1, LYRM4 and ISCU. Interacts with ACO1. Interacts with ISCU (cytoplasmic form). Processed in two steps by mitochondrial processing peptidase (MPP). MPP first cleaves the precursor to intermediate form and subsequently converts the intermediate to yield frataxin mature form (frataxin(81-210)) which is the predominant form. The additional forms, frataxin(56-210) and frataxin(78-210), seem to be produced when the normal maturation process is impaired; their physiological relevance is unsure. In terms of tissue distribution, heart, liver, skeletal muscle, kidney, spleen and thymus. Weakly expressed in the brain and lung.

It localises to the mitochondrion. The protein localises to the cytoplasm. Its subcellular location is the cytosol. The enzyme catalyses 4 Fe(2+) + O2 + 4 H(+) = 4 Fe(3+) + 2 H2O. Functions as an activator of persulfide transfer to the scaffoding protein ISCU as component of the core iron-sulfur cluster (ISC) assembly complex and participates to the [2Fe-2S] cluster assembly. Accelerates sulfur transfer from NFS1 persulfide intermediate to ISCU and to small thiols such as L-cysteine and glutathione leading to persulfuration of these thiols and ultimately sulfide release. Binds ferrous ion and is released from FXN upon the addition of both L-cysteine and reduced FDX2 during [2Fe-2S] cluster assembly. The core iron-sulfur cluster (ISC) assembly complex is involved in the de novo synthesis of a [2Fe-2S] cluster, the first step of the mitochondrial iron-sulfur protein biogenesis. This process is initiated by the cysteine desulfurase complex (NFS1:LYRM4:NDUFAB1) that produces persulfide which is delivered on the scaffold protein ISCU in a FXN-dependent manner. Then this complex is stabilized by FDX2 which provides reducing equivalents to accomplish the [2Fe-2S] cluster assembly. Finally, the [2Fe-2S] cluster is transferred from ISCU to chaperone proteins, including HSCB, HSPA9 and GLRX5. May play a role in the protection against iron-catalyzed oxidative stress through its ability to catalyze the oxidation of Fe(2+) to Fe(3+); the oligomeric form but not the monomeric form has in vitro ferroxidase activity. May be able to store large amounts of iron in the form of a ferrihydrite mineral by oligomerization; however, the physiological relevance is unsure as reports are conflicting and the function has only been shown using heterologous overexpression systems. May function as an iron chaperone protein that protects the aconitase [4Fe-4S]2+ cluster from disassembly and promotes enzyme reactivation. May play a role as a high affinity iron binding partner for FECH that is capable of both delivering iron to ferrochelatase and mediating the terminal step in mitochondrial heme biosynthesis. Functionally, modulates the RNA-binding activity of ACO1. May be involved in the cytoplasmic iron-sulfur protein biogenesis. May contribute to oxidative stress resistance and overall cell survival. This is Frataxin, mitochondrial from Mus musculus (Mouse).